The primary structure comprises 426 residues: Tol-Pal system protein TolB (426 aa).

The N-terminal stretch at 1–25 is a signal peptide; that stretch reads MNAMSRISRRIFLALALSLAGLAQA.

The protein belongs to the TolB family. In terms of assembly, the Tol-Pal system is composed of five core proteins: the inner membrane proteins TolA, TolQ and TolR, the periplasmic protein TolB and the outer membrane protein Pal. They form a network linking the inner and outer membranes and the peptidoglycan layer.

Its subcellular location is the periplasm. Its function is as follows. Part of the Tol-Pal system, which plays a role in outer membrane invagination during cell division and is important for maintaining outer membrane integrity. In Dechloromonas aromatica (strain RCB), this protein is Tol-Pal system protein TolB.